The chain runs to 164 residues: uncharacterized protein (164 aa).

A signal peptide spans 1–25 (MMKTVKHLLCCAIAASALISTGVHA).

This is an uncharacterized protein from Escherichia coli (strain K12).